Here is an 86-residue protein sequence, read N- to C-terminus: Large ribosomal subunit protein uL23 (86 aa).

This sequence belongs to the universal ribosomal protein uL23 family. In terms of assembly, part of the 50S ribosomal subunit. Contacts protein L29.

Binds to 23S rRNA. One of the proteins that surrounds the polypeptide exit tunnel on the outside of the ribosome. In Methanococcus maripaludis (strain C5 / ATCC BAA-1333), this protein is Large ribosomal subunit protein uL23.